The following is a 265-amino-acid chain: uncharacterized protein (265 aa).

This is an uncharacterized protein from Saccharolobus islandicus (Sulfolobus islandicus).